The primary structure comprises 396 residues: MSWSFLTRLLEEIHNHSTFVGKIWLTVLIVFRIVLTAVGGESIYYDEQSKFVCNTEQPGCENVCYDAFAPLSHVRFWVFQIILVATPSVMYLGYAIHKIAKMEHGEADKKAARSKPYAMRWKQHRALEETEEDHEEDPMMYPEMELESEKENKEQSQPKPKHDGRRRIREDGLMKIYVLQLLARTVFEVGFLIGQYFLYGFQVHPFYVCSRLPCPHKIDCFISRPTEKTIFLLIMYGVTGLCLLLNIWEMLHLGFGTIRDSLNSKRRELDDPGAYNYPFTWNTPSAPPGYNIAVKPDQIQYTELSNAKIAYKQNKANIAQEQQYGSHEEHLPADLETLQREIRMAQERLDLAIQAYHHQNNPHGPREKKAKVGSKSGSNKSSISSKSGDGKTSVWI.

The Cytoplasmic segment spans residues 1–18 (MSWSFLTRLLEEIHNHST). A helical transmembrane segment spans residues 19 to 39 (FVGKIWLTVLIVFRIVLTAVG). Over 40-75 (GESIYYDEQSKFVCNTEQPGCENVCYDAFAPLSHVR) the chain is Extracellular. The chain crosses the membrane as a helical span at residues 76–96 (FWVFQIILVATPSVMYLGYAI). At 97–175 (HKIAKMEHGE…RRIREDGLMK (79 aa)) the chain is on the cytoplasmic side. Positions 145–165 (ELESEKENKEQSQPKPKHDGR) are disordered. The span at 147-156 (ESEKENKEQS) shows a compositional bias: basic and acidic residues. Residues 176 to 198 (IYVLQLLARTVFEVGFLIGQYFL) form a helical membrane-spanning segment. The Extracellular portion of the chain corresponds to 199–229 (YGFQVHPFYVCSRLPCPHKIDCFISRPTEKT). The chain crosses the membrane as a helical span at residues 230-250 (IFLLIMYGVTGLCLLLNIWEM). Over 251 to 396 (LHLGFGTIRD…SGDGKTSVWI (146 aa)) the chain is Cytoplasmic. Residues 303–358 (ELSNAKIAYKQNKANIAQEQQYGSHEEHLPADLETLQREIRMAQERLDLAIQAYHH) adopt a coiled-coil conformation. Residues 357–396 (HHQNNPHGPREKKAKVGSKSGSNKSSISSKSGDGKTSVWI) are disordered. Over residues 373-396 (GSKSGSNKSSISSKSGDGKTSVWI) the composition is skewed to low complexity.

Belongs to the connexin family. Gamma-type subfamily. As to quaternary structure, a connexon is composed of a hexamer of connexins. Interacts with CNST.

The protein resides in the cell membrane. Its subcellular location is the cell junction. The protein localises to the gap junction. Its function is as follows. One gap junction consists of a cluster of closely packed pairs of transmembrane channels, the connexons, through which materials of low MW diffuse from one cell to a neighboring cell. The sequence is that of Gap junction gamma-1 protein (GJC1) from Cricetulus griseus (Chinese hamster).